The sequence spans 377 residues: Succinyl-diaminopimelate desuccinylase (377 aa).

His67 contributes to the Zn(2+) binding site. Residue Asp69 is part of the active site. Asp100 lines the Zn(2+) pocket. Glu134 (proton acceptor) is an active-site residue. Zn(2+) contacts are provided by Glu135, Glu163, and His349.

This sequence belongs to the peptidase M20A family. DapE subfamily. As to quaternary structure, homodimer. Zn(2+) is required as a cofactor. Co(2+) serves as cofactor.

It carries out the reaction N-succinyl-(2S,6S)-2,6-diaminopimelate + H2O = (2S,6S)-2,6-diaminopimelate + succinate. It participates in amino-acid biosynthesis; L-lysine biosynthesis via DAP pathway; LL-2,6-diaminopimelate from (S)-tetrahydrodipicolinate (succinylase route): step 3/3. Catalyzes the hydrolysis of N-succinyl-L,L-diaminopimelic acid (SDAP), forming succinate and LL-2,6-diaminopimelate (DAP), an intermediate involved in the bacterial biosynthesis of lysine and meso-diaminopimelic acid, an essential component of bacterial cell walls. In Glaesserella parasuis serovar 5 (strain SH0165) (Haemophilus parasuis), this protein is Succinyl-diaminopimelate desuccinylase.